We begin with the raw amino-acid sequence, 420 residues long: Methionine aminopeptidase 2 (420 aa).

Residues 1–48 (MSDAIAKDAVNTSSEKEPVSATPELKTSGSPDAAVSSGDKKKKKKKKK) are disordered. His-172 is a binding site for substrate. 3 residues coordinate a divalent metal cation: Asp-192, Asp-203, and His-272. His-280 contacts substrate. A divalent metal cation-binding residues include Glu-305 and Glu-401.

Belongs to the peptidase M24A family. Methionine aminopeptidase eukaryotic type 2 subfamily. Co(2+) serves as cofactor. Zn(2+) is required as a cofactor. The cofactor is Mn(2+). It depends on Fe(2+) as a cofactor.

It localises to the cytoplasm. The catalysed reaction is Release of N-terminal amino acids, preferentially methionine, from peptides and arylamides.. Functionally, cotranslationally removes the N-terminal methionine from nascent proteins. The N-terminal methionine is often cleaved when the second residue in the primary sequence is small and uncharged (Met-Ala-, Cys, Gly, Pro, Ser, Thr, or Val). The protein is Methionine aminopeptidase 2 of Lachancea thermotolerans (strain ATCC 56472 / CBS 6340 / NRRL Y-8284) (Yeast).